The primary structure comprises 128 residues: Ribonuclease pancreatic (128 aa).

A disordered region spans residues 1 to 20; that stretch reads KETAAMKFQRQHMDSGSSLS. K7 and R10 together coordinate substrate. Catalysis depends on H12, which acts as the Proton acceptor. Intrachain disulfides connect C26/C84, C40/C95, C58/C110, and C65/C72. N34 carries an N-linked (GlcNAc...) asparagine glycan. Residues 41-45, K66, and R85 contribute to the substrate site; that span reads KPVNT. Residue H119 is the Proton donor of the active site.

It belongs to the pancreatic ribonuclease family. As to quaternary structure, monomer. Interacts with and forms tight 1:1 complexes with RNH1. Dimerization of two such complexes may occur. Interaction with RNH1 inhibits this protein. As to expression, pancreas.

Its subcellular location is the secreted. It catalyses the reaction an [RNA] containing cytidine + H2O = an [RNA]-3'-cytidine-3'-phosphate + a 5'-hydroxy-ribonucleotide-3'-[RNA].. The enzyme catalyses an [RNA] containing uridine + H2O = an [RNA]-3'-uridine-3'-phosphate + a 5'-hydroxy-ribonucleotide-3'-[RNA].. Functionally, endonuclease that catalyzes the cleavage of RNA on the 3' side of pyrimidine nucleotides. Acts on single-stranded and double-stranded RNA. The sequence is that of Ribonuclease pancreatic (RNASE1) from Choloepus hoffmanni (Hoffmann's two-fingered sloth).